Consider the following 208-residue polypeptide: Thymidylate kinase (208 aa).

An ATP-binding site is contributed by 10–17 (GPEGSGKT).

Belongs to the thymidylate kinase family.

The catalysed reaction is dTMP + ATP = dTDP + ADP. Phosphorylation of dTMP to form dTDP in both de novo and salvage pathways of dTTP synthesis. The chain is Thymidylate kinase from Bacillus cereus (strain ATCC 14579 / DSM 31 / CCUG 7414 / JCM 2152 / NBRC 15305 / NCIMB 9373 / NCTC 2599 / NRRL B-3711).